The following is a 130-amino-acid chain: Large ribosomal subunit protein bL12 (130 aa).

A disordered region spans residues 94–114 (MTEGLPKTVKEKTSKSDAEDT).

Belongs to the bacterial ribosomal protein bL12 family. Homodimer. Part of the ribosomal stalk of the 50S ribosomal subunit. Forms a multimeric L10(L12)X complex, where L10 forms an elongated spine to which 2 to 4 L12 dimers bind in a sequential fashion. Binds GTP-bound translation factors.

Functionally, forms part of the ribosomal stalk which helps the ribosome interact with GTP-bound translation factors. Is thus essential for accurate translation. This chain is Large ribosomal subunit protein bL12, found in Chlamydia caviae (strain ATCC VR-813 / DSM 19441 / 03DC25 / GPIC) (Chlamydophila caviae).